We begin with the raw amino-acid sequence, 247 residues long: 1-(5-phosphoribosyl)-5-[(5-phosphoribosylamino)methylideneamino] imidazole-4-carboxamide isomerase (247 aa).

D8 serves as the catalytic Proton acceptor. D130 (proton donor) is an active-site residue.

This sequence belongs to the HisA/HisF family.

The protein resides in the cytoplasm. It catalyses the reaction 1-(5-phospho-beta-D-ribosyl)-5-[(5-phospho-beta-D-ribosylamino)methylideneamino]imidazole-4-carboxamide = 5-[(5-phospho-1-deoxy-D-ribulos-1-ylimino)methylamino]-1-(5-phospho-beta-D-ribosyl)imidazole-4-carboxamide. It participates in amino-acid biosynthesis; L-histidine biosynthesis; L-histidine from 5-phospho-alpha-D-ribose 1-diphosphate: step 4/9. This is 1-(5-phosphoribosyl)-5-[(5-phosphoribosylamino)methylideneamino] imidazole-4-carboxamide isomerase from Stutzerimonas stutzeri (strain A1501) (Pseudomonas stutzeri).